Reading from the N-terminus, the 622-residue chain is DNA mismatch repair protein MutL (622 aa).

The segment covering 399 to 414 has biased composition (basic and acidic residues); sequence SSQNFHPDENDYRAEE. A disordered region spans residues 399–422; sequence SSQNFHPDENDYRAEEASPAEENP.

The protein belongs to the DNA mismatch repair MutL/HexB family.

This protein is involved in the repair of mismatches in DNA. It is required for dam-dependent methyl-directed DNA mismatch repair. May act as a 'molecular matchmaker', a protein that promotes the formation of a stable complex between two or more DNA-binding proteins in an ATP-dependent manner without itself being part of a final effector complex. This Phocaeicola vulgatus (strain ATCC 8482 / DSM 1447 / JCM 5826 / CCUG 4940 / NBRC 14291 / NCTC 11154) (Bacteroides vulgatus) protein is DNA mismatch repair protein MutL.